Here is a 269-residue protein sequence, read N- to C-terminus: Phosphatidate cytidylyltransferase (269 aa).

8 consecutive transmembrane segments (helical) span residues 13–33, 50–70, 81–101, 110–130, 138–158, 180–200, 201–221, and 247–267; these read LAAIVFLFLVIVGKLPFTILI, LKLVSLPGLIGLLLLWMFLLP, ISKMEIALFAVLLLLTYTVLV, VGFITLAAIYIGMCFHYFIEI, LTYIFYACVVIWSTDSGAYFV, FAGGIVIALVLATIFQLVAQL, PIPYIYLLLITLFLSVFGQLG, and ILDRFDSFLFVMPFLYFLLAL.

The protein belongs to the CDS family.

The protein resides in the cell membrane. The catalysed reaction is a 1,2-diacyl-sn-glycero-3-phosphate + CTP + H(+) = a CDP-1,2-diacyl-sn-glycerol + diphosphate. It functions in the pathway phospholipid metabolism; CDP-diacylglycerol biosynthesis; CDP-diacylglycerol from sn-glycerol 3-phosphate: step 3/3. The polypeptide is Phosphatidate cytidylyltransferase (cdsA) (Bacillus subtilis (strain 168)).